The following is a 205-amino-acid chain: Cytochrome c oxidase subunit 3 (205 aa).

Helical transmembrane passes span 29–49, 72–92, 104–124, 142–162, and 184–204; these read TIVF…MYFV, ALLI…GVFA, WFLV…YEYI, FFIT…AFVV, and SYYW…IYFI.

Associates with subunits I, II and IV to form cytochrome c oxidase. The 4 subunit cytochrome c oxidase forms a supercomplex with the menaquinol-cytochrome c reductase complex (cytochrome bc1).

The protein localises to the cell membrane. It catalyses the reaction 4 Fe(II)-[cytochrome c] + O2 + 8 H(+)(in) = 4 Fe(III)-[cytochrome c] + 2 H2O + 4 H(+)(out). This Corynebacterium glutamicum (strain ATCC 13032 / DSM 20300 / JCM 1318 / BCRC 11384 / CCUG 27702 / LMG 3730 / NBRC 12168 / NCIMB 10025 / NRRL B-2784 / 534) protein is Cytochrome c oxidase subunit 3 (ctaE).